Here is a 196-residue protein sequence, read N- to C-terminus: Holliday junction branch migration complex subunit RuvA (196 aa).

Positions 1–65 (MIGYLRGKII…EDALQLFGFH (65 aa)) are domain I. The interval 66–140 (DKEEKNLFLS…GKLVSIEEGG (75 aa)) is domain II. Residues 140 to 144 (GVVAK) form a flexible linker region. The domain III stretch occupies residues 145–196 (AKSVAHTQITSALLNLGYKSQLVDQFVSSLPADIAVEDGIRKGFQTLSGGLS).

It belongs to the RuvA family. As to quaternary structure, homotetramer. Forms an RuvA(8)-RuvB(12)-Holliday junction (HJ) complex. HJ DNA is sandwiched between 2 RuvA tetramers; dsDNA enters through RuvA and exits via RuvB. An RuvB hexamer assembles on each DNA strand where it exits the tetramer. Each RuvB hexamer is contacted by two RuvA subunits (via domain III) on 2 adjacent RuvB subunits; this complex drives branch migration. In the full resolvosome a probable DNA-RuvA(4)-RuvB(12)-RuvC(2) complex forms which resolves the HJ.

The protein resides in the cytoplasm. In terms of biological role, the RuvA-RuvB-RuvC complex processes Holliday junction (HJ) DNA during genetic recombination and DNA repair, while the RuvA-RuvB complex plays an important role in the rescue of blocked DNA replication forks via replication fork reversal (RFR). RuvA specifically binds to HJ cruciform DNA, conferring on it an open structure. The RuvB hexamer acts as an ATP-dependent pump, pulling dsDNA into and through the RuvAB complex. HJ branch migration allows RuvC to scan DNA until it finds its consensus sequence, where it cleaves and resolves the cruciform DNA. The polypeptide is Holliday junction branch migration complex subunit RuvA (Bdellovibrio bacteriovorus (strain ATCC 15356 / DSM 50701 / NCIMB 9529 / HD100)).